A 590-amino-acid polypeptide reads, in one-letter code: Protein NRT1/ PTR FAMILY 6.4 (590 aa).

Positions methionine 1–proline 24 are disordered. Helical transmembrane passes span isoleucine 48–serine 68, alanine 73–leucine 93, valine 104–isoleucine 124, glycine 147–isoleucine 167, phenylalanine 197–aspartate 217, glycine 222–glycine 242, valine 332–tyrosine 352, glycine 371–phenylalanine 391, isoleucine 419–alanine 439, alanine 453–glycine 473, glycine 492–valine 512, and phenylalanine 533–methionine 553.

This sequence belongs to the major facilitator superfamily. Proton-dependent oligopeptide transporter (POT/PTR) (TC 2.A.17) family. In terms of tissue distribution, expressed in leaves, flowers and siliques. Detected in leaves.

The protein resides in the membrane. In terms of biological role, low-affinity nitrate transporter. This Arabidopsis thaliana (Mouse-ear cress) protein is Protein NRT1/ PTR FAMILY 6.4 (NPF6.4).